Consider the following 317-residue polypeptide: Aspartate carbamoyltransferase catalytic subunit (317 aa).

Carbamoyl phosphate contacts are provided by arginine 66 and threonine 67. Residue lysine 94 coordinates L-aspartate. Carbamoyl phosphate-binding residues include arginine 116, histidine 144, and glutamine 147. 2 residues coordinate L-aspartate: arginine 177 and arginine 231. Glycine 272 and proline 273 together coordinate carbamoyl phosphate.

It belongs to the aspartate/ornithine carbamoyltransferase superfamily. ATCase family. Heterododecamer (2C3:3R2) of six catalytic PyrB chains organized as two trimers (C3), and six regulatory PyrI chains organized as three dimers (R2).

It catalyses the reaction carbamoyl phosphate + L-aspartate = N-carbamoyl-L-aspartate + phosphate + H(+). It participates in pyrimidine metabolism; UMP biosynthesis via de novo pathway; (S)-dihydroorotate from bicarbonate: step 2/3. Functionally, catalyzes the condensation of carbamoyl phosphate and aspartate to form carbamoyl aspartate and inorganic phosphate, the committed step in the de novo pyrimidine nucleotide biosynthesis pathway. This is Aspartate carbamoyltransferase catalytic subunit from Rhodopseudomonas palustris (strain BisB18).